The sequence spans 173 residues: Siroheme decarboxylase alpha subunit (173 aa).

The substrate site is built by histidine 115 and arginine 119.

Belongs to the Ahb/Nir family. As to quaternary structure, forms a heterodimer composed of AhbA and AhbB.

The enzyme catalyses siroheme + 2 H(+) = 12,18-didecarboxysiroheme + 2 CO2. It functions in the pathway porphyrin-containing compound metabolism; protoheme biosynthesis. Involved in siroheme-dependent heme b biosynthesis. Catalyzes the decarboxylation of siroheme into didecarboxysiroheme. Siroheme is decarboxylated to monodecarboxysiroheme, which is in turn decarboxylated to didecarboxysiroheme. This is Siroheme decarboxylase alpha subunit from Desulfovibrio desulfuricans (strain ATCC 27774 / DSM 6949 / MB).